A 141-amino-acid polypeptide reads, in one-letter code: Hemoglobin subunit alpha-1/2 (141 aa).

Positions 1–141 constitute a Globin domain; it reads VLSPADKTNV…VSTVLTSKYR (141 aa). Position 3 is a phosphoserine (Ser3). Lys7 bears the N6-succinyllysine mark. Position 8 is a phosphothreonine (Thr8). Position 11 is an N6-succinyllysine (Lys11). At Lys16 the chain carries N6-acetyllysine; alternate. Position 16 is an N6-succinyllysine; alternate (Lys16). Phosphotyrosine is present on Tyr24. An N6-succinyllysine modification is found at Lys40. Phosphoserine is present on Ser49. His58 lines the O2 pocket. Residue His87 coordinates heme b. A Phosphoserine modification is found at Ser102. The residue at position 108 (Thr108) is a Phosphothreonine. The residue at position 124 (Ser124) is a Phosphoserine. Phosphothreonine occurs at positions 134 and 137. Residue Ser138 is modified to Phosphoserine.

This sequence belongs to the globin family. As to quaternary structure, heterotetramer of two alpha chains and two beta chains. Red blood cells.

Its function is as follows. Involved in oxygen transport from the lung to the various peripheral tissues. The polypeptide is Hemoglobin subunit alpha-1/2 (Leptonychotes weddellii (Weddell seal)).